We begin with the raw amino-acid sequence, 339 residues long: Dihydroorotate dehydrogenase (quinone) (339 aa).

FMN is bound by residues 62 to 66 (AGMDK) and threonine 86. Residue lysine 66 participates in substrate binding. Residue 111 to 115 (NRMGF) participates in substrate binding. Residues asparagine 139 and asparagine 172 each contribute to the FMN site. A substrate-binding site is contributed by asparagine 172. Catalysis depends on serine 175, which acts as the Nucleophile. Residue asparagine 177 coordinates substrate. FMN contacts are provided by lysine 217 and threonine 245. Residue 246-247 (NT) participates in substrate binding. FMN contacts are provided by residues glycine 268, glycine 297, and 318–319 (YS).

The protein belongs to the dihydroorotate dehydrogenase family. Type 2 subfamily. As to quaternary structure, monomer. FMN is required as a cofactor.

Its subcellular location is the cell membrane. The enzyme catalyses (S)-dihydroorotate + a quinone = orotate + a quinol. It functions in the pathway pyrimidine metabolism; UMP biosynthesis via de novo pathway; orotate from (S)-dihydroorotate (quinone route): step 1/1. Its function is as follows. Catalyzes the conversion of dihydroorotate to orotate with quinone as electron acceptor. The sequence is that of Dihydroorotate dehydrogenase (quinone) from Shewanella sp. (strain MR-4).